A 308-amino-acid chain; its full sequence is MPLSPDPYSALRHAAKYVQQFRRKTFVVKLGGAMLSDPRLRRAACEQIALLWTFSIRPVVVHGGGPELDTLCDALHLPVEKVAGRRVTSAPVLDAAKMVLAGKLHTDLLADLQAAGVPAVGLSGVDAGLIKARKRPPVMVTEAGATEGKLVDYGLVGDIEQVDTRVVEHLRSADYVPVIAPLSGGTDGAVYNTNADTVAAALAVALSAEKLFFLVQVPGLLKNVSDPSSLVTLANLTDLATMESTGAIAGGMKPKAHAIRHALVGGVGSVHLVSGVQPNALLEEVFTNEGSGTMVVRENAQKPAGAVG.

Residues 64 to 65 (GG), R86, and N192 contribute to the substrate site.

This sequence belongs to the acetylglutamate kinase family. ArgB subfamily.

The protein localises to the cytoplasm. The catalysed reaction is N-acetyl-L-glutamate + ATP = N-acetyl-L-glutamyl 5-phosphate + ADP. The protein operates within amino-acid biosynthesis; L-arginine biosynthesis; N(2)-acetyl-L-ornithine from L-glutamate: step 2/4. In terms of biological role, catalyzes the ATP-dependent phosphorylation of N-acetyl-L-glutamate. In Myxococcus xanthus (strain DK1622), this protein is Acetylglutamate kinase.